Here is a 328-residue protein sequence, read N- to C-terminus: Malate dehydrogenase (328 aa).

NAD(+) is bound at residue 16-22; that stretch reads GAAGQIS. 2 residues coordinate substrate: R97 and R103. NAD(+) is bound by residues N110, Q117, and 134-136; that span reads VGN. N136 and R167 together coordinate substrate. The Proton acceptor role is filled by H192.

The protein belongs to the LDH/MDH superfamily. MDH type 2 family. Homotetramer.

The enzyme catalyses (S)-malate + NAD(+) = oxaloacetate + NADH + H(+). Its activity is regulated as follows. Citrate activates the enzyme in the oxidation of malate to oxaloacetate and inhibits it in the reverse reaction. Catalyzes the reversible oxidation of malate to oxaloacetate. Exhibits higher catalytic efficiency for oxaloacetate reduction than for malate oxidation in vitro. Almost equally active both for NADH and NADPH on the bases of the kcat values at pH 6.5, but catalytic efficiency for oxaloacetate reduction is 50-fold higher with NADH. This Corynebacterium glutamicum (strain ATCC 13032 / DSM 20300 / JCM 1318 / BCRC 11384 / CCUG 27702 / LMG 3730 / NBRC 12168 / NCIMB 10025 / NRRL B-2784 / 534) protein is Malate dehydrogenase.